Here is a 262-residue protein sequence, read N- to C-terminus: Hydroxyethylthiazole kinase (262 aa).

Met50 is a substrate binding site. 2 residues coordinate ATP: Arg125 and Thr171. Gly198 provides a ligand contact to substrate.

Belongs to the Thz kinase family. Requires Mg(2+) as cofactor.

It carries out the reaction 5-(2-hydroxyethyl)-4-methylthiazole + ATP = 4-methyl-5-(2-phosphooxyethyl)-thiazole + ADP + H(+). The protein operates within cofactor biosynthesis; thiamine diphosphate biosynthesis; 4-methyl-5-(2-phosphoethyl)-thiazole from 5-(2-hydroxyethyl)-4-methylthiazole: step 1/1. Functionally, catalyzes the phosphorylation of the hydroxyl group of 4-methyl-5-beta-hydroxyethylthiazole (THZ). The protein is Hydroxyethylthiazole kinase of Shigella boydii serotype 4 (strain Sb227).